The sequence spans 69 residues: Cell division protein CrgA (69 aa).

The next 2 membrane-spanning stretches (helical) occupy residues V14–F34 and A45–M65.

The protein belongs to the CrgA family.

Its subcellular location is the cell membrane. Involved in cell division. This Tropheryma whipplei (strain TW08/27) (Whipple's bacillus) protein is Cell division protein CrgA.